Reading from the N-terminus, the 519-residue chain is Putative glucosylceramidase 4 (519 aa).

Positions 1 to 24 (MILNISVSLLIFLAFYGFSSDAKS) are cleaved as a signal peptide. The active-site Proton donor is E256. Residue E361 is the Nucleophile of the active site.

The protein belongs to the glycosyl hydrolase 30 family.

It carries out the reaction a beta-D-glucosylceramide + H2O = an N-acyl-sphingoid base + D-glucose. The enzyme catalyses a beta-D-glucosyl-(1&lt;-&gt;1')-N-acylsphing-4-enine + H2O = an N-acylsphing-4-enine + D-glucose. The catalysed reaction is an N-acyl-1-beta-D-glucosyl-15-methylhexadecasphing-4-enine + H2O = an N-acyl-15-methylhexadecasphing-4-enine + D-glucose. It participates in lipid metabolism; sphingolipid metabolism. In terms of biological role, glucosylceramidase that catalyzes the hydrolysis of glucosylceramides into free ceramides and glucose. C.elegans contains specific sphingoid bases, which are unique or different in structure compared to the sphingoid bases found in other animals. Two examples of these distinctive compounds are: 15-methylhexadecasphinganine and 15-methylhexadecasphing-4-enine. The protein is Putative glucosylceramidase 4 (gba-4) of Caenorhabditis elegans.